A 153-amino-acid polypeptide reads, in one-letter code: Ribonuclease H (153 aa).

The 142-residue stretch at 7 to 148 folds into the RNase H type-1 domain; that stretch reads PADLVEMWTD…ADMLANQGVA (142 aa). Positions 16, 54, 76, and 140 each coordinate Mg(2+).

Belongs to the RNase H family. Monomer. The cofactor is Mg(2+).

Its subcellular location is the cytoplasm. The enzyme catalyses Endonucleolytic cleavage to 5'-phosphomonoester.. Endonuclease that specifically degrades the RNA of RNA-DNA hybrids. This Bordetella avium (strain 197N) protein is Ribonuclease H.